The chain runs to 201 residues: MKALITGFEPFDKEEINPSWEAVSSLHNNIDDIEIIKLKLPTVFKKSYEKLFDSLENIKPDIVICVGQAGGRYEISLERVAVNIDDAGIKDNEGNQPIDEIIFNDGENAYFSRLPIKRIKEELNKISIPSAVSNTAGTFVCNHIMYSLLYYIKKNNLNIKGGFIHVPYITEQILDKPNTPYMTKDMIVKALEVIIKTSLYN.

Catalysis depends on residues E78, C141, and H165.

Belongs to the peptidase C15 family. In terms of assembly, homotetramer.

It localises to the cytoplasm. The catalysed reaction is Release of an N-terminal pyroglutamyl group from a polypeptide, the second amino acid generally not being Pro.. Its function is as follows. Removes 5-oxoproline from various penultimate amino acid residues except L-proline. This Brachyspira hyodysenteriae (strain ATCC 49526 / WA1) protein is Pyrrolidone-carboxylate peptidase.